Here is a 482-residue protein sequence, read N- to C-terminus: ATP synthase subunit beta (482 aa).

162–169 (GGAGVGKT) serves as a coordination point for ATP.

In terms of assembly, F-type ATPases have 2 components, CF(1) - the catalytic core - and CF(0) - the membrane proton channel. CF(1) has five subunits: alpha(3), beta(3), gamma(1), delta(1), epsilon(1). CF(0) has four main subunits: a(1), b(1), b'(1) and c(9-12).

It is found in the cellular thylakoid membrane. The catalysed reaction is ATP + H2O + 4 H(+)(in) = ADP + phosphate + 5 H(+)(out). With respect to regulation, inhibited by dicyclohexylcarbodiimide. Functionally, produces ATP from ADP in the presence of a proton gradient across the membrane. The catalytic sites are hosted primarily by the beta subunits. Its function is as follows. The complex from the organism is particularly stable to disruption and remains functional after 6 hrs at 55 degrees Celsius. The polypeptide is ATP synthase subunit beta (Thermosynechococcus vestitus (strain NIES-2133 / IAM M-273 / BP-1)).